Here is a 184-residue protein sequence, read N- to C-terminus: TRAF-interacting protein with FHA domain-containing protein A (184 aa).

Thr-9 is modified (phosphothreonine; by ALPK1). Residues 47–103 (VKFGRNSNICHYTFQDKQVSRVQFSLQLFKKFNSSVLSFEIKNMSKKTNLIVDSREL) enclose the FHA domain. Positions 165 to 184 (TYSLCSSQSSSPTEMDENES) are disordered. A compositionally biased stretch (polar residues) spans 167–177 (SLCSSQSSSPT).

Belongs to the TIFA family. Homooligomer; homooligomerizes following phosphorylation at Thr-9. Interacts with IRAK1, TRAF2 and TRAF6. Interacts with TIFAB; binding to TIFAB inhibits TRAF6 activation, possibly by inducing a conformational change in TIFA. Interacts with ZCCHC11; binding to ZCCHC11 suppresses the TRAF6-dependent activation of NF-kappa-B. Post-translationally, phosphorylated at Thr-9 following detection of ADP-D-glycero-beta-D-manno-heptose (ADP-Heptose) by ALPK1. Phosphorylation at Thr-9 by ALPK1 leads to the formation of an intermolecular binding between the FHA domain and phosphorylated Thr-9, promoting TIFA oligomerization and TIFA-mediated NF-kappa-B activation.

The protein resides in the cytoplasm. Functionally, adapter molecule that plays a key role in the activation of pro-inflammatory NF-kappa-B signaling following detection of bacterial pathogen-associated molecular pattern metabolites (PAMPs). Promotes activation of an innate immune response by inducing the oligomerization and polyubiquitination of TRAF6, which leads to the activation of TAK1 and IKK through a proteasome-independent mechanism. TIFA-dependent innate immune response is triggered by ADP-D-glycero-beta-D-manno-heptose (ADP-Heptose), a potent PAMP present in all Gram-negative and some Gram-positive bacteria: ADP-Heptose is recognized by ALPK1, which phosphorylates TIFA at Thr-9, leading to TIFA homooligomerization and subsequent activation of pro-inflammatory NF-kappa-B signaling. The protein is TRAF-interacting protein with FHA domain-containing protein A of Homo sapiens (Human).